A 243-amino-acid chain; its full sequence is Uridylate kinase (243 aa).

Residue 15-18 coordinates ATP; sequence KISG. Residue glycine 57 coordinates UMP. Residues glycine 58 and arginine 62 each coordinate ATP. Residues aspartate 77 and 138–145 each bind UMP; that span reads TGNPFFTT. Residues threonine 165, phenylalanine 171, and aspartate 174 each contribute to the ATP site.

This sequence belongs to the UMP kinase family. As to quaternary structure, homohexamer.

It is found in the cytoplasm. It catalyses the reaction UMP + ATP = UDP + ADP. Its pathway is pyrimidine metabolism; CTP biosynthesis via de novo pathway; UDP from UMP (UMPK route): step 1/1. Its activity is regulated as follows. Inhibited by UTP. Catalyzes the reversible phosphorylation of UMP to UDP. This Blochmanniella floridana protein is Uridylate kinase.